Reading from the N-terminus, the 185-residue chain is Translocon-associated protein subunit gamma (185 aa).

Met-1 bears the N-acetylmethionine mark. Over 1 to 27 (MAPKGGSKQQSEEDLLLQDFSRNLSAK) the chain is Lumenal. A phosphoserine mark is found at Ser-7 and Ser-11. The helical transmembrane segment at 28 to 48 (SSALFFGNAFIVSAIPIWLYW) threads the bilayer. At 49-54 (RIWHMD) the chain is on the cytoplasmic side. A helical transmembrane segment spans residues 55–76 (LIQSAVLYSVMTLVSTYLVAFA). The Lumenal portion of the chain corresponds to 77–135 (YKNVKFVLKHKVAQKREDAVSKEVTRKLSEADNRKMSRKEKDERILWKKNEVADYEATT). Phosphoserine is present on Ser-105. A helical transmembrane segment spans residues 136–157 (FSIFYNNTLFLVLVIVASFFIL). The Cytoplasmic portion of the chain corresponds to 158–163 (KNFNPT). Residues 164–184 (VNYILSISASSGLIALLSTGS) form a helical membrane-spanning segment.

This sequence belongs to the TRAP-gamma family. As to quaternary structure, heterotetramer of TRAP-alpha, TRAP-beta, TRAP-delta and TRAP-gamma.

The protein resides in the endoplasmic reticulum membrane. TRAP proteins are part of a complex whose function is to bind calcium to the ER membrane and thereby regulate the retention of ER resident proteins. The chain is Translocon-associated protein subunit gamma (Ssr3) from Mus musculus (Mouse).